The following is a 109-amino-acid chain: Mannose-specific lectin (109 aa).

The Bulb-type lectin domain maps to 1–109 (DNILYSSEVL…PPIWATGTGR (109 aa)). Cys29 and Cys52 are disulfide-bonded. Residues 79–82 (TGTN) constitute a propeptide that is removed on maturation.

Homotrimer or homotetramer.

The protein localises to the secreted. Mannose-specific lectin. Shows agglutinating activity toward rabbit erythrocytes and mitogenic activity towards mouse lymphocytes. This is Mannose-specific lectin from Aloe arborescens (Kidachi aloe).